The sequence spans 638 residues: 1-deoxy-D-xylulose-5-phosphate synthase (638 aa).

Thiamine diphosphate is bound by residues histidine 75 and 116–118 (AHS). Aspartate 147 is a binding site for Mg(2+). Thiamine diphosphate-binding positions include 148 to 149 (GA), asparagine 177, tyrosine 288, and glutamate 370. Asparagine 177 lines the Mg(2+) pocket.

This sequence belongs to the transketolase family. DXPS subfamily. As to quaternary structure, homodimer. Requires Mg(2+) as cofactor. The cofactor is thiamine diphosphate.

The enzyme catalyses D-glyceraldehyde 3-phosphate + pyruvate + H(+) = 1-deoxy-D-xylulose 5-phosphate + CO2. It participates in metabolic intermediate biosynthesis; 1-deoxy-D-xylulose 5-phosphate biosynthesis; 1-deoxy-D-xylulose 5-phosphate from D-glyceraldehyde 3-phosphate and pyruvate: step 1/1. Catalyzes the acyloin condensation reaction between C atoms 2 and 3 of pyruvate and glyceraldehyde 3-phosphate to yield 1-deoxy-D-xylulose-5-phosphate (DXP). This is 1-deoxy-D-xylulose-5-phosphate synthase from Cupriavidus pinatubonensis (strain JMP 134 / LMG 1197) (Cupriavidus necator (strain JMP 134)).